The primary structure comprises 398 residues: Nicotinate phosphoribosyltransferase (398 aa).

A Phosphohistidine; by autocatalysis modification is found at H214.

Belongs to the NAPRTase family. Transiently phosphorylated on a His residue during the reaction cycle. Phosphorylation strongly increases the affinity for substrates and increases the rate of nicotinate D-ribonucleotide production. Dephosphorylation regenerates the low-affinity form of the enzyme, leading to product release.

The enzyme catalyses nicotinate + 5-phospho-alpha-D-ribose 1-diphosphate + ATP + H2O = nicotinate beta-D-ribonucleotide + ADP + phosphate + diphosphate. It functions in the pathway cofactor biosynthesis; NAD(+) biosynthesis; nicotinate D-ribonucleotide from nicotinate: step 1/1. Functionally, catalyzes the synthesis of beta-nicotinate D-ribonucleotide from nicotinate and 5-phospho-D-ribose 1-phosphate at the expense of ATP. The protein is Nicotinate phosphoribosyltransferase of Xanthomonas campestris pv. campestris (strain B100).